The sequence spans 186 residues: MLVILKENIRTLGKLGEIVKVKPGYARNFLFPQRKAVKATKESIAKLEEQRSFLEEENIRKLNLASELAASFAGKFVILVKQASEDGKIFGSVTTREVARSLSQEYEVDHRKISFNGVKIRNLGEYQASIEFHSEIVVQVAVHVVRSETDAHELRQVKSQSQKSQQQEAKQNEVGEATDSDKADQK.

The disordered stretch occupies residues 153–186; it reads ELRQVKSQSQKSQQQEAKQNEVGEATDSDKADQK. Over residues 157 to 169 the composition is skewed to low complexity; that stretch reads VKSQSQKSQQQEA.

It belongs to the bacterial ribosomal protein bL9 family.

Functionally, binds to the 23S rRNA. The polypeptide is Large ribosomal subunit protein bL9 (Wolbachia sp. subsp. Brugia malayi (strain TRS)).